The chain runs to 111 residues: Nucleoid-associated protein Tmel_0542 (111 aa).

It belongs to the YbaB/EbfC family. Homodimer.

It localises to the cytoplasm. It is found in the nucleoid. Its function is as follows. Binds to DNA and alters its conformation. May be involved in regulation of gene expression, nucleoid organization and DNA protection. The protein is Nucleoid-associated protein Tmel_0542 of Thermosipho melanesiensis (strain DSM 12029 / CIP 104789 / BI429).